Here is a 401-residue protein sequence, read N- to C-terminus: Bifunctional enzyme IspD/IspF (401 aa).

The 2-C-methyl-D-erythritol 4-phosphate cytidylyltransferase stretch occupies residues 1 to 234 (MQKPPRTAAI…SRLTAALGDI (234 aa)). Positions 235 to 401 (RTGTGYDVHA…SPWGAEGQAS (167 aa)) are 2-C-methyl-D-erythritol 2,4-cyclodiphosphate synthase. Residues Asp241 and His243 each coordinate a divalent metal cation. 4-CDP-2-C-methyl-D-erythritol 2-phosphate contacts are provided by residues 241–243 (DVH) and 267–268 (HS). His275 is a binding site for a divalent metal cation. Residues 289–291 (DIG), 365–368 (TTSE), Phe372, and Arg375 contribute to the 4-CDP-2-C-methyl-D-erythritol 2-phosphate site.

It in the N-terminal section; belongs to the IspD/TarI cytidylyltransferase family. IspD subfamily. This sequence in the C-terminal section; belongs to the IspF family. The cofactor is a divalent metal cation.

The enzyme catalyses 2-C-methyl-D-erythritol 4-phosphate + CTP + H(+) = 4-CDP-2-C-methyl-D-erythritol + diphosphate. It carries out the reaction 4-CDP-2-C-methyl-D-erythritol 2-phosphate = 2-C-methyl-D-erythritol 2,4-cyclic diphosphate + CMP. It functions in the pathway isoprenoid biosynthesis; isopentenyl diphosphate biosynthesis via DXP pathway; isopentenyl diphosphate from 1-deoxy-D-xylulose 5-phosphate: step 2/6. It participates in isoprenoid biosynthesis; isopentenyl diphosphate biosynthesis via DXP pathway; isopentenyl diphosphate from 1-deoxy-D-xylulose 5-phosphate: step 4/6. Bifunctional enzyme that catalyzes the formation of 4-diphosphocytidyl-2-C-methyl-D-erythritol from CTP and 2-C-methyl-D-erythritol 4-phosphate (MEP) (IspD), and catalyzes the conversion of 4-diphosphocytidyl-2-C-methyl-D-erythritol 2-phosphate (CDP-ME2P) to 2-C-methyl-D-erythritol 2,4-cyclodiphosphate (ME-CPP) with a corresponding release of cytidine 5-monophosphate (CMP) (IspF). The chain is Bifunctional enzyme IspD/IspF from Rhodopseudomonas palustris (strain HaA2).